The chain runs to 461 residues: Sensor histidine kinase MctS (461 aa).

The next 2 helical transmembrane spans lie at Ile7–Thr27 and Phe203–Leu223. His259 carries the post-translational modification Phosphohistidine; by autocatalysis. The region spanning Leu360–Ala450 is the Histidine kinase domain.

Its subcellular location is the cell membrane. It catalyses the reaction ATP + protein L-histidine = ADP + protein N-phospho-L-histidine.. Functionally, member of the two-component regulatory system MctS/MctR, which activates mctP expression. The chain is Sensor histidine kinase MctS from Rhizobium johnstonii (strain DSM 114642 / LMG 32736 / 3841) (Rhizobium leguminosarum bv. viciae).